Reading from the N-terminus, the 758-residue chain is 5-methyltetrahydropteroyltriglutamate--homocysteine methyltransferase (758 aa).

Residues 16–19 (RELK) and Lys116 contribute to the 5-methyltetrahydropteroyltri-L-glutamate site. L-homocysteine is bound by residues 436 to 438 (IGS) and Glu489. Residues 436–438 (IGS) and Glu489 contribute to the L-methionine site. Residues 520–521 (RC) and Trp566 each bind 5-methyltetrahydropteroyltri-L-glutamate. Asp604 contributes to the L-homocysteine binding site. Position 604 (Asp604) interacts with L-methionine. Glu610 lines the 5-methyltetrahydropteroyltri-L-glutamate pocket. Zn(2+) is bound by residues His646, Cys648, and Glu670. The active-site Proton donor is the His699. A Zn(2+)-binding site is contributed by Cys731.

The protein belongs to the vitamin-B12 independent methionine synthase family. Zn(2+) is required as a cofactor.

The catalysed reaction is 5-methyltetrahydropteroyltri-L-glutamate + L-homocysteine = tetrahydropteroyltri-L-glutamate + L-methionine. It participates in amino-acid biosynthesis; L-methionine biosynthesis via de novo pathway; L-methionine from L-homocysteine (MetE route): step 1/1. Its function is as follows. Catalyzes the transfer of a methyl group from 5-methyltetrahydrofolate to homocysteine resulting in methionine formation. This chain is 5-methyltetrahydropteroyltriglutamate--homocysteine methyltransferase, found in Xylella fastidiosa (strain M12).